The sequence spans 380 residues: Serpin B7 (380 aa).

A Phosphoserine modification is found at Ser217.

This sequence belongs to the serpin family. Ov-serpin subfamily.

It is found in the cytoplasm. Might function as an inhibitor of Lys-specific proteases. Might influence the maturation of megakaryocytes via its action as a serpin. This chain is Serpin B7 (Serpinb7), found in Mus musculus (Mouse).